The following is a 239-amino-acid chain: mRNA turnover protein 4 homolog (239 aa).

Positions 216-239 (QQMGDDLPESAPESEGESEEEDDS) are disordered. Over residues 221 to 239 (DLPESAPESEGESEEEDDS) the composition is skewed to acidic residues. Phosphoserine occurs at positions 225, 229, and 233.

It belongs to the universal ribosomal protein uL10 family. As to quaternary structure, associates with the pre-60S ribosomal particle. Interacts with MINAS-60 (product of an alternative open reading frame of RBM10).

It localises to the nucleus. The protein localises to the nucleolus. Its subcellular location is the cytoplasm. In terms of biological role, component of the ribosome assembly machinery. Nuclear paralog of the ribosomal protein P0, it binds pre-60S subunits at an early stage of assembly in the nucleolus, and is replaced by P0 in cytoplasmic pre-60S subunits and mature 80S ribosomes. The sequence is that of mRNA turnover protein 4 homolog (MRTO4) from Bos taurus (Bovine).